Reading from the N-terminus, the 158-residue chain is Transcriptional repressor NrdR (158 aa).

Residues 3–34 fold into a zinc finger; that stretch reads CPYCQSEDTQVKDSRPAEDGAVIRRRRVCSVC. The ATP-cone domain maps to 49–139; that stretch reads LMVVKKSGRR…VYRNFSKAVD (91 aa).

This sequence belongs to the NrdR family. Requires Zn(2+) as cofactor.

In terms of biological role, negatively regulates transcription of bacterial ribonucleotide reductase nrd genes and operons by binding to NrdR-boxes. The sequence is that of Transcriptional repressor NrdR from Brucella abortus (strain S19).